Here is a 122-residue protein sequence, read N- to C-terminus: Large ribosomal subunit protein uL14 (122 aa).

The protein belongs to the universal ribosomal protein uL14 family. In terms of assembly, part of the 50S ribosomal subunit. Forms a cluster with proteins L3 and L19. In the 70S ribosome, L14 and L19 interact and together make contacts with the 16S rRNA in bridges B5 and B8.

Binds to 23S rRNA. Forms part of two intersubunit bridges in the 70S ribosome. This is Large ribosomal subunit protein uL14 from Chlorobium phaeovibrioides (strain DSM 265 / 1930) (Prosthecochloris vibrioformis (strain DSM 265)).